A 101-amino-acid polypeptide reads, in one-letter code: Urease subunit beta (101 aa).

This sequence belongs to the urease beta subunit family. Heterotrimer of UreA (gamma), UreB (beta) and UreC (alpha) subunits. Three heterotrimers associate to form the active enzyme.

The protein localises to the cytoplasm. The catalysed reaction is urea + 2 H2O + H(+) = hydrogencarbonate + 2 NH4(+). The protein operates within nitrogen metabolism; urea degradation; CO(2) and NH(3) from urea (urease route): step 1/1. This Cupriavidus necator (strain ATCC 17699 / DSM 428 / KCTC 22496 / NCIMB 10442 / H16 / Stanier 337) (Ralstonia eutropha) protein is Urease subunit beta.